A 350-amino-acid chain; its full sequence is Protein-glutamate methylesterase/protein-glutamine glutaminase 1 (350 aa).

One can recognise a Response regulatory domain in the interval 3 to 121 (KVLIVEDSPV…RDYDIRARDL (119 aa)). The residue at position 54 (Asp54) is a 4-aspartylphosphate. The CheB-type methylesterase domain occupies 148–342 (PASGEPDIGK…PPEKIARVLV (195 aa)). Catalysis depends on residues Ser170, His197, and Asp290.

This sequence belongs to the CheB family. In terms of processing, phosphorylated by CheA. Phosphorylation of the N-terminal regulatory domain activates the methylesterase activity.

The protein localises to the cytoplasm. The catalysed reaction is [protein]-L-glutamate 5-O-methyl ester + H2O = L-glutamyl-[protein] + methanol + H(+). It carries out the reaction L-glutaminyl-[protein] + H2O = L-glutamyl-[protein] + NH4(+). In terms of biological role, involved in chemotaxis. Part of a chemotaxis signal transduction system that modulates chemotaxis in response to various stimuli. Catalyzes the demethylation of specific methylglutamate residues introduced into the chemoreceptors (methyl-accepting chemotaxis proteins or MCP) by CheR. Also mediates the irreversible deamidation of specific glutamine residues to glutamic acid. The sequence is that of Protein-glutamate methylesterase/protein-glutamine glutaminase 1 from Syntrophus aciditrophicus (strain SB).